A 237-amino-acid chain; its full sequence is Ribonuclease PH (237 aa).

Phosphate contacts are provided by residues arginine 86 and 124–126 (GTR).

It belongs to the RNase PH family. As to quaternary structure, homohexameric ring arranged as a trimer of dimers.

It catalyses the reaction tRNA(n+1) + phosphate = tRNA(n) + a ribonucleoside 5'-diphosphate. In terms of biological role, phosphorolytic 3'-5' exoribonuclease that plays an important role in tRNA 3'-end maturation. Removes nucleotide residues following the 3'-CCA terminus of tRNAs; can also add nucleotides to the ends of RNA molecules by using nucleoside diphosphates as substrates, but this may not be physiologically important. Probably plays a role in initiation of 16S rRNA degradation (leading to ribosome degradation) during starvation. The protein is Ribonuclease PH of Methylobacterium nodulans (strain LMG 21967 / CNCM I-2342 / ORS 2060).